The sequence spans 416 residues: UPF0761 membrane protein Rfer_2991 (416 aa).

6 consecutive transmembrane segments (helical) span residues 60–80 (MALV…PMFA), 117–137 (LGGA…LTID), 156–176 (VLVY…SLSI), 187–207 (VVGV…FFMV), 222–242 (WVKW…LELA), and 268–288 (ILLI…VIAA).

The protein belongs to the UPF0761 family.

It localises to the cell inner membrane. The chain is UPF0761 membrane protein Rfer_2991 from Albidiferax ferrireducens (strain ATCC BAA-621 / DSM 15236 / T118) (Rhodoferax ferrireducens).